Here is a 353-residue protein sequence, read N- to C-terminus: Outer membrane protein P5 (353 aa).

A signal peptide spans Met1–Ala21. The next 8 beta stranded transmembrane spans lie at Thr27–Ala37, Ser58–Ile69, Leu77–Asp85, His104–Glu115, Leu120–Val128, Gly158–Ala167, Leu172–Gln179, and Ser205–Arg213. One can recognise an OmpA-like domain in the interval Val227–Lys353. A disulfide bridge connects residues Cys326 and Cys338.

This sequence belongs to the outer membrane OOP (TC 1.B.6) superfamily. OmpA family. Monomer and homodimer.

Its subcellular location is the cell outer membrane. Its function is as follows. With TolR probably plays a role in maintaining the position of the peptidoglycan cell wall in the periplasm. Acts as a porin with low permeability that allows slow penetration of small solutes; an internal gate slows down solute passage. This Haemophilus influenzae protein is Outer membrane protein P5.